A 736-amino-acid polypeptide reads, in one-letter code: 1,4-alpha-glucan branching enzyme GlgB (736 aa).

Asp-415 serves as the catalytic Nucleophile. The Proton donor role is filled by Glu-470.

Belongs to the glycosyl hydrolase 13 family. GlgB subfamily. In terms of assembly, monomer.

The enzyme catalyses Transfers a segment of a (1-&gt;4)-alpha-D-glucan chain to a primary hydroxy group in a similar glucan chain.. It functions in the pathway glycan biosynthesis; glycogen biosynthesis. In terms of biological role, catalyzes the formation of the alpha-1,6-glucosidic linkages in glycogen by scission of a 1,4-alpha-linked oligosaccharide from growing alpha-1,4-glucan chains and the subsequent attachment of the oligosaccharide to the alpha-1,6 position. The polypeptide is 1,4-alpha-glucan branching enzyme GlgB (Burkholderia cenocepacia (strain HI2424)).